A 322-amino-acid chain; its full sequence is MFYYPGKEQKVCDICGVKVGGQPGEYPTVLAGTIFYAGHKIVKDEDKGIFDEEAAEELIKMEEELADETGNPMMAHIMGESEEAIIRYLDWVADVTDAPIIVDSTEAEVKVAAVKHAQEVGLAERVVYNSINASVEDEEIQAIKESDCNSAIVLAFNPMDASVEGRMKILTEGEEGVSEKGMLEISDECGIENPLIDTAYTPFGSGAGTAYKVTLAVKAKLGLPVGGAPHNVPSAWDWLRDFMKKLKEEGKEEWAELAHESSDWGSNVVAATLCCDYLLFGPIENAPAIWPVVAMVDALIVEANEDVGVEPQVEEHPANIVR.

The protein belongs to the MtrH family. In terms of assembly, the complex is composed of 8 subunits; MtrA, MtrB, MtrC, MtrD, MtrE, MtrF, MtrG and MtrH.

The catalysed reaction is 5-methyl-5,6,7,8-tetrahydromethanopterin + coenzyme M + 2 Na(+)(in) = 5,6,7,8-tetrahydromethanopterin + methyl-coenzyme M + 2 Na(+)(out). The protein operates within one-carbon metabolism; methanogenesis from CO(2); methyl-coenzyme M from 5,10-methylene-5,6,7,8-tetrahydromethanopterin: step 2/2. Its function is as follows. Part of a complex that catalyzes the formation of methyl-coenzyme M and tetrahydromethanopterin from coenzyme M and methyl-tetrahydromethanopterin. This is an energy-conserving, sodium-ion translocating step. MtrH catalyzes the transfer of the methyl group from methyl-tetrahydromethanopterin to the corrinoid prosthetic group of MtrA. The sequence is that of Tetrahydromethanopterin S-methyltransferase subunit H from Methanopyrus kandleri (strain AV19 / DSM 6324 / JCM 9639 / NBRC 100938).